Reading from the N-terminus, the 127-residue chain is Holo-[acyl-carrier-protein] synthase (127 aa).

Asp8 and Glu57 together coordinate Mg(2+).

The protein belongs to the P-Pant transferase superfamily. AcpS family. Mg(2+) is required as a cofactor.

The protein localises to the cytoplasm. It catalyses the reaction apo-[ACP] + CoA = holo-[ACP] + adenosine 3',5'-bisphosphate + H(+). Transfers the 4'-phosphopantetheine moiety from coenzyme A to a Ser of acyl-carrier-protein. This is Holo-[acyl-carrier-protein] synthase from Ruthia magnifica subsp. Calyptogena magnifica.